A 512-amino-acid chain; its full sequence is Ferredoxin--nitrite reductase (512 aa).

C396, C402, C437, and C441 together coordinate [4Fe-4S] cluster. Siroheme is bound at residue C441.

The protein belongs to the nitrite and sulfite reductase 4Fe-4S domain family.

It carries out the reaction 6 oxidized [2Fe-2S]-[ferredoxin] + NH4(+) + 2 H2O = nitrite + 6 reduced [2Fe-2S]-[ferredoxin] + 8 H(+). The sequence is that of Ferredoxin--nitrite reductase (nirA) from Synechococcus elongatus (strain ATCC 33912 / PCC 7942 / FACHB-805) (Anacystis nidulans R2).